We begin with the raw amino-acid sequence, 769 residues long: 5-methyltetrahydropteroyltriglutamate--homocysteine methyltransferase (769 aa).

5-methyltetrahydropteroyltri-L-glutamate is bound by residues 16 to 19 and K118; that span reads RELK. Residues 440–442 and E493 each bind L-homocysteine; that span reads IGS. L-methionine is bound by residues 440–442 and E493; that span reads IGS. Residues 524 to 525 and W570 contribute to the 5-methyltetrahydropteroyltri-L-glutamate site; that span reads RC. D608 contributes to the L-homocysteine binding site. D608 serves as a coordination point for L-methionine. E614 is a 5-methyltetrahydropteroyltri-L-glutamate binding site. Zn(2+) contacts are provided by H650, C652, and E674. Residue H706 is the Proton donor of the active site. A Zn(2+)-binding site is contributed by C738.

The protein belongs to the vitamin-B12 independent methionine synthase family. Requires Zn(2+) as cofactor.

It carries out the reaction 5-methyltetrahydropteroyltri-L-glutamate + L-homocysteine = tetrahydropteroyltri-L-glutamate + L-methionine. The protein operates within amino-acid biosynthesis; L-methionine biosynthesis via de novo pathway; L-methionine from L-homocysteine (MetE route): step 1/1. Catalyzes the transfer of a methyl group from 5-methyltetrahydrofolate to homocysteine resulting in methionine formation. The protein is 5-methyltetrahydropteroyltriglutamate--homocysteine methyltransferase of Acidiphilium cryptum (strain JF-5).